Reading from the N-terminus, the 359-residue chain is 3-dehydroquinate synthase (359 aa).

NAD(+) contacts are provided by residues 72–77, 106–110, 130–131, Lys143, Lys152, and 170–173; these read DGEQYK, GVIGD, TT, and CLKT. Zn(2+) contacts are provided by Glu185, His248, and His265.

It belongs to the sugar phosphate cyclases superfamily. Dehydroquinate synthase family. The cofactor is Co(2+). Zn(2+) serves as cofactor. It depends on NAD(+) as a cofactor.

The protein resides in the cytoplasm. The catalysed reaction is 7-phospho-2-dehydro-3-deoxy-D-arabino-heptonate = 3-dehydroquinate + phosphate. It functions in the pathway metabolic intermediate biosynthesis; chorismate biosynthesis; chorismate from D-erythrose 4-phosphate and phosphoenolpyruvate: step 2/7. Functionally, catalyzes the conversion of 3-deoxy-D-arabino-heptulosonate 7-phosphate (DAHP) to dehydroquinate (DHQ). The polypeptide is 3-dehydroquinate synthase (Photobacterium profundum (strain SS9)).